A 326-amino-acid polypeptide reads, in one-letter code: Target of rapamycin complex subunit lst8 (326 aa).

WD repeat units follow at residues 1–37 (MNSN…CTRT), 40–80 (HQDS…PVIN), 83–122 (GVSK…LQCQ), 126–165 (QVNA…NEQL), 168–207 (ETDV…GEDL), 218–257 (AHKR…LMTE), and 268–309 (TSRG…REYS).

This sequence belongs to the WD repeat LST8 family. Part of the mechanistic target of rapamycin complex 1 (mTORC1) which contains MTOR, MLST8 and RPTOR. Component of the mechanistic target of rapamycin complex 2 (mTORC2), consisting in two heterotretramers composed of MTOR, MLST8, RICTOR and MAPKAP1/SIN1.

It localises to the lysosome membrane. The protein localises to the cytoplasm. Its function is as follows. Subunit of both mTORC1 and mTORC2, which regulates cell growth and survival in response to nutrient and hormonal signals. mTORC1 is activated in response to growth factors or amino acids. In response to nutrients, mTORC1 is recruited to the lysosome membrane and promotes protein, lipid and nucleotide synthesis by phosphorylating several substrates, such as ribosomal protein S6 kinase (RPS6KB1 and RPS6KB2) and EIF4EBP1 (4E-BP1). In the same time, it inhibits catabolic pathways by phosphorylating the autophagy initiation components ULK1 and ATG13, as well as transcription factor TFEB, a master regulators of lysosomal biogenesis and autophagy. The mTORC1 complex is inhibited in response to starvation and amino acid depletion. Within mTORC1, MLST8 interacts directly with MTOR and enhances its kinase activity. In nutrient-poor conditions, stabilizes the MTOR-RPTOR interaction and favors RPTOR-mediated inhibition of MTOR activity. As part of the mTORC2 complex, transduces signals from growth factors to pathways involved in proliferation, cytoskeletal organization, lipogenesis and anabolic output. mTORC2 is also activated by growth factors, but seems to be nutrient-insensitive. In response to growth factors, mTORC2 phosphorylates and activates AGC protein kinase family members, including AKT (AKT1, AKT2 and AKT3), PKC (PRKCA, PRKCB and PRKCE) and SGK1. mTORC2 functions upstream of Rho GTPases to regulate the actin cytoskeleton, probably by activating one or more Rho-type guanine nucleotide exchange factors. mTORC2 promotes the serum-induced formation of stress-fibers or F-actin. Within mTORC2, MLST8 acts as a bridge between MAPKAP1/SIN1 and MTOR. The chain is Target of rapamycin complex subunit lst8 (mlst8) from Xenopus tropicalis (Western clawed frog).